The primary structure comprises 371 residues: Peptide chain release factor 2 (371 aa).

Position 252 is an N5-methylglutamine (Gln252).

This sequence belongs to the prokaryotic/mitochondrial release factor family. Methylated by PrmC. Methylation increases the termination efficiency of RF2.

The protein resides in the cytoplasm. Peptide chain release factor 2 directs the termination of translation in response to the peptide chain termination codons UGA and UAA. This is Peptide chain release factor 2 from Staphylococcus haemolyticus (strain JCSC1435).